The following is a 286-amino-acid chain: Polyamine aminopropyltransferase (286 aa).

One can recognise a PABS domain in the interval 5–238 (PLWHETLHDH…GIMTFAWASD (234 aa)). Glutamine 33 lines the S-methyl-5'-thioadenosine pocket. Histidine 64 and aspartate 88 together coordinate spermidine. S-methyl-5'-thioadenosine is bound by residues glutamate 108 and 140–141 (DG). Aspartate 158 functions as the Proton acceptor in the catalytic mechanism. 158–161 (DCTD) lines the spermidine pocket. Proline 165 provides a ligand contact to S-methyl-5'-thioadenosine.

The protein belongs to the spermidine/spermine synthase family. Homodimer or homotetramer.

Its subcellular location is the cytoplasm. It catalyses the reaction S-adenosyl 3-(methylsulfanyl)propylamine + putrescine = S-methyl-5'-thioadenosine + spermidine + H(+). It functions in the pathway amine and polyamine biosynthesis; spermidine biosynthesis; spermidine from putrescine: step 1/1. Catalyzes the irreversible transfer of a propylamine group from the amino donor S-adenosylmethioninamine (decarboxy-AdoMet) to putrescine (1,4-diaminobutane) to yield spermidine. The chain is Polyamine aminopropyltransferase from Klebsiella pneumoniae (strain 342).